A 271-amino-acid chain; its full sequence is SVPGDPIDILWQQLAILKQLIAHSAGRLRLCLSAADIERCREDKVLAMVAHIEGAGGFDGEGRDLQAFYAAGVRSIGPFWNIANRFGSGVNGSFPGSPDTGPGLTAAGIDLIKQVNALKMQIDVSHMNEKAFWDTAHHATSPLVATHSNAHALCPQPRNLTDQQLRAIRDSGGVVGVNFGNAFLRADGRRDSDTPLTTIVRHIDYLINIMGEDHVALGSDFDGITLPDELGDVAGLPRLINTLRASGYDQLVLDKLLWRNWLRVLKNVWQQ.

The protein belongs to the metallo-dependent hydrolases superfamily. Peptidase M19 family.

This is an uncharacterized protein from Klebsiella pneumoniae.